We begin with the raw amino-acid sequence, 770 residues long: MAQWNQLQQLDTRYLEQLHQLYSDSFPMELRQFLAPWIESQDWAYAASKESHATLVFHNLLGEIDQQYSRFLQESNVLYQHNLRRIKQFLQSRYLEKPMEIARIVARCLWEESRLLQTAATAAQQGGQANHPTAAVVTEKQQMLEQHLQDVRKRVQDLEQKMKVVENLQDDFDFNYKTLKSQGDMQDLNGNNQSVTRQKMQQLEQMLTALDQMRRSIVSELAGLLSAMEYVQKTLTDEELADWKRRQQIACIGGPPNICLDRLENWITSLAESQLQTRQQIKKLEELQQKVSYKGDPIVQHRPMLEERIVELFRNLMKSAFVVERQPCMPMHPDRPLVIKTGVQFTTKVRLLVKFPELNYQLKIKVCIDKDSGDVAALRGSRKFNILGTNTKVMNMEESNNGSLSAEFKHLTLREQRCGNGGRANCDASLIVTEELHLITFETEVYHQGLKIDLETHSLPVVVISNICQMPNAWASILWYNMLTNNPKNVNFFTKPPIGTWDQVAEVLSWQFSSTTKRGLSIEQLTTLAEKLLGPGVNYSGCQITWAKFCKENMAGKGFSFWVWLDNIIDLVKKYILALWNEGYIMGFISKERERAILSTKPPGTFLLRFSESSKEGGVTFTWVEKDISGKTQIQSVEPYTKQQLNNMSFAEIIMGYKIMDATNILVSPLVYLYPDIPKEEAFGKYCRPESQEHPEADPGSAAPYLKTKFICVTPTTCSNTIDLPMSPRTLDSLMQFGNNGEGAEPSAGGQFESLTFDMELTSECATSPM.

The residue at position 2 (Ala2) is an N-acetylalanine. N6-acetyllysine occurs at positions 49 and 87. The Essential for nuclear import signature appears at 150-162 (DVRKRVQDLEQKM). The 91-residue stretch at 580–670 (WNEGYIMGFI…DATNILVSPL (91 aa)) folds into the SH2 domain. Lys601, Lys615, and Lys631 each carry allysine; alternate. Lys601, Lys615, and Lys631 each carry N6-acetyllysine; alternate. Residue Tyr640 is modified to Phosphotyrosine; by TYK2. An Allysine; alternate modification is found at Lys685. Residue Lys685 is modified to N6-acetyllysine; alternate. Pro704 is modified (phosphotyrosine). A Phosphotyrosine; by FER and PTK6 modification is found at Tyr705. An N6-acetyllysine modification is found at Lys707. The residue at position 714 (Thr714) is a Phosphothreonine. Ser727 bears the Phosphoserine; by DYRK2, NLK, NEK6, IRAK1, RPS6KA5, ZIPK/DAPK3 and PKC/PRKCE mark.

This sequence belongs to the transcription factor STAT family. As to quaternary structure, forms a homodimer or a heterodimer with a related family member (at least STAT1). Component of a promoter-binding complex composed of STAT3, NFATC3 and NFATC4; complex formation is enhanced by calcineurin. Interacts with IL31RA, NCOA1, PELP1, SIPAR, SOCS7, STATIP1 and TMF1. Interacts with IL23R in presence of IL23. Interacts (via SH2 domain) with NLK. Interacts with ARL2BP; the interaction is enhanced by LIF and JAK1 expression. Interacts with KPNA4 and KPNA5; KPNA4 may be the primary mediator of nuclear import. Interacts with CAV2; the interaction is increased on insulin-induced tyrosine phosphorylation of CAV2 and leads to STAT3 activation. Interacts with ARL2BP; interaction is enhanced with ARL2. Interacts with NEK6. Binds to CDK9 when activated and nuclear. Interacts with BMX. Interacts with ZIPK/DAPK3. Interacts with PIAS3; the interaction occurs on stimulation by IL6, CNTF or OSM and inhibits the DNA binding activity of STAT3. In prostate cancer cells, interacts with PRKCE and promotes DNA binding activity of STAT3. Interacts with STMN3, antagonizing its microtubule-destabilizing activity. Interacts with the 'Lys-129' acetylated form of BIRC5/survivin. Interacts with FER. Interacts (via SH2 domain) with EIF2AK2/PKR (via the kinase catalytic domain). Interacts with INPP5F; the interaction is independent of STAT3 Tyr-705 phosphorylation status. Interacts with FGFR4. Interacts with OCIAD1. Interacts with OCIAD2. Interacts (unphosphorylated or phosphorylated at Ser-727) with PHB1. Interacts and may form heterodimers with NHLH1. Found in a complex with SLC39A6, SLC39A10 and with the 'Ser-727' phosphorylated form of STAT3 throughout mitosis. Interacts (when phosphorylated at Tyr-705) with CD274/PD-L1; promoting nuclear translocation of CD274/PD-L1. Interacts (when acetylated) with EP300 (via bromo domain); interaction takes place following STAT3 acetylation by EP300 and promotes enhanceosome assembly. Interacts (when acetylated) with BRD2 (via bromo domain); interaction promotes STAT3 recruitment to chromatin and T-helper Th17 cell differentiation. Interacts with FAM220A/SIPAR; the interaction occurs in both the nucleus and the cytoplasm, is enhanced by IL6 and promotes STAT3 dephosphorylation. Interacts in both unphosphorylated and phosphorylated forms with FAM220A but interacts preferentially in the phosphorylated form in the nucleus. Interacts with PTPN2; the interaction is promoted by FAM220A and leads to STAT3 dephosphorylation which negatively regulates STAT3 transcriptional activator activity. In terms of assembly, (Microbial infection) Interacts with HCV core protein. (Microbial infection) Interacts with S.typhimurium SarA. As to quaternary structure, (Microbial infection) Interacts with human cytomegalovirus (HHV-5) immediate early protein IE1; this interaction leads to STAT3 nuclear accumulation and disruption of IL6-induced STAT3 phosphorylation. Post-translationally, tyrosine phosphorylated upon stimulation with EGF. Tyrosine phosphorylated in response to constitutively activated FGFR1, FGFR2, FGFR3 and FGFR4. Activated through tyrosine phosphorylation by BMX. Tyrosine phosphorylated in response to IL6, IL11, LIF, CNTF, KITLG/SCF, CSF1, EGF, PDGF, IFN-alpha, LEP and OSM. Activated KIT promotes phosphorylation on tyrosine residues and subsequent translocation to the nucleus. Phosphorylated on serine upon DNA damage, probably by ATM or ATR. Serine phosphorylation is important for the formation of stable DNA-binding STAT3 homodimers and maximal transcriptional activity. ARL2BP may participate in keeping the phosphorylated state of STAT3 within the nucleus. Upon LPS challenge, phosphorylated within the nucleus by IRAK1. Upon erythropoietin treatment, phosphorylated on Ser-727 by RPS6KA5. Dephosphorylation on tyrosine residues by PTPN2 negatively regulates IL6/interleukin-6 signaling. Phosphorylation at Tyr-705 by PTK6, isoform M2 of PKM (PKM2) or FER leads to an increase of its transcriptional activity. Phosphorylation at Tyr-705 is increased in the presence of calcineurin. Phosphorylation at Tyr-640 by TYK2 negatively regulates transcriptional activity. Acetylated on lysine residues by EP300/p300, promoting its activation. Acetylation at Lys-49 and Lys-87 by EP300/p300 promotes its activation. Acetylation at Lys-87 by EP300/p300 promotes its association with BRD2 and recruitment to chromatin. Deacetylated at Lys-49 and Lys-87 by HDAC1. Acetylation at Lys-685 by EP300/p300 promotes its homodimerization and activation. Deacetylated at Lys-685 by HDAC3. Acetylated on lysine residues by CREBBP. Deacetylation by LOXL3 leads to disrupt STAT3 dimerization and inhibit STAT3 transcription activity. Oxidation of lysine residues to allysine on STAT3 preferentially takes place on lysine residues that are acetylated. In terms of processing, some lysine residues are oxidized to allysine by LOXL3, leading to disrupt STAT3 dimerization and inhibit STAT3 transcription activity. Oxidation of lysine residues to allysine on STAT3 preferentially takes place on lysine residues that are acetylated. Post-translationally, (Microbial infection) Phosphorylated on Tyr-705 in the presence of S.typhimurium SarA. In terms of tissue distribution, heart, brain, placenta, lung, liver, skeletal muscle, kidney and pancreas. Expressed in naive CD4(+) T cells as well as T-helper Th17, Th1 and Th2 cells.

It localises to the cytoplasm. It is found in the nucleus. In terms of biological role, signal transducer and transcription activator that mediates cellular responses to interleukins, KITLG/SCF, LEP and other growth factors. Once activated, recruits coactivators, such as NCOA1 or MED1, to the promoter region of the target gene. May mediate cellular responses to activated FGFR1, FGFR2, FGFR3 and FGFR4. Upon activation of IL6ST/gp130 signaling by interleukin-6 (IL6), binds to the IL6-responsive elements identified in the promoters of various acute-phase protein genes. Activated by IL31 through IL31RA. Acts as a regulator of inflammatory response by regulating differentiation of naive CD4(+) T-cells into T-helper Th17 or regulatory T-cells (Treg): acetylation promotes its transcription activity and cell differentiation while deacetylation and oxidation of lysine residues by LOXL3 inhibits differentiation. Involved in cell cycle regulation by inducing the expression of key genes for the progression from G1 to S phase, such as CCND1. Mediates the effects of LEP on melanocortin production, body energy homeostasis and lactation. May play an apoptotic role by transctivating BIRC5 expression under LEP activation. Cytoplasmic STAT3 represses macroautophagy by inhibiting EIF2AK2/PKR activity. Plays a crucial role in basal beta cell functions, such as regulation of insulin secretion. Following JAK/STAT signaling activation and as part of a complex with NFATC3 and NFATC4, binds to the alpha-beta E4 promoter region of CRYAB and activates transcription in cardiomyocytes. This is Signal transducer and activator of transcription 3 from Homo sapiens (Human).